Consider the following 217-residue polypeptide: 3,4-dihydroxy-2-butanone 4-phosphate synthase (217 aa).

Residues 37–38 (RE), Asp42, 150–154 (RGGHT), and Glu174 each bind D-ribulose 5-phosphate. Position 38 (Glu38) interacts with Mg(2+). A Mg(2+)-binding site is contributed by His153.

Belongs to the DHBP synthase family. As to quaternary structure, homodimer. The cofactor is Mg(2+). Mn(2+) is required as a cofactor.

It catalyses the reaction D-ribulose 5-phosphate = (2S)-2-hydroxy-3-oxobutyl phosphate + formate + H(+). It functions in the pathway cofactor biosynthesis; riboflavin biosynthesis; 2-hydroxy-3-oxobutyl phosphate from D-ribulose 5-phosphate: step 1/1. Its function is as follows. Catalyzes the conversion of D-ribulose 5-phosphate to formate and 3,4-dihydroxy-2-butanone 4-phosphate. This is 3,4-dihydroxy-2-butanone 4-phosphate synthase from Escherichia coli O127:H6 (strain E2348/69 / EPEC).